The chain runs to 1215 residues: Chromosome segregation protein sudA (1215 aa).

32–39 provides a ligand contact to ATP; it reads GRNGSGKS. Residues 177-522 are a coiled coil; that stretch reads KIMHETNSKR…LSQMMDHNTS (346 aa). Residues 313–332 are disordered; it reads SDNQAAAQESKARHDESLKA. The region spanning 538-650 is the SMC hinge domain; it reads EGVYGTLAEL…PNLQVASQYA (113 aa). Residues 654–676 form a disordered region; the sequence is GVNATTPEGDRSDKRGALTGGFH. A coiled-coil region spans residues 684–1091; that stretch reads DAVKNLAKWR…EEAKHSVENY (408 aa).

It belongs to the SMC family. SMC3 subfamily.

Its subcellular location is the nucleus. Involved in chromosome segregation in mitosis. The protein is Chromosome segregation protein sudA (sudA) of Emericella nidulans (strain FGSC A4 / ATCC 38163 / CBS 112.46 / NRRL 194 / M139) (Aspergillus nidulans).